The primary structure comprises 264 residues: Cell division protein FtsQ (264 aa).

Residues 1-24 (MAGPTTAERGARQQESSGPPRVRR) are disordered. Over 1 to 32 (MAGPTTAERGARQQESSGPPRVRRFRPPRLRT) the chain is Cytoplasmic. The helical transmembrane segment at 33-53 (IIILAVALVLVAGGTVWVLYG) threads the bilayer. Topologically, residues 54 to 264 (SNWTRLERVS…VATAPASSGS (211 aa)) are extracellular. Residues 57-126 (TRLERVSVSG…HGIGLKVTER (70 aa)) form the POTRA domain.

It belongs to the FtsQ/DivIB family. FtsQ subfamily.

The protein localises to the cell membrane. In terms of biological role, essential cell division protein. This Streptomyces coelicolor (strain ATCC BAA-471 / A3(2) / M145) protein is Cell division protein FtsQ.